The sequence spans 340 residues: N-acetyl-gamma-glutamyl-phosphate reductase (340 aa).

Cys146 is an active-site residue.

It belongs to the NAGSA dehydrogenase family. Type 1 subfamily.

The protein resides in the cytoplasm. It carries out the reaction N-acetyl-L-glutamate 5-semialdehyde + phosphate + NADP(+) = N-acetyl-L-glutamyl 5-phosphate + NADPH + H(+). It functions in the pathway amino-acid biosynthesis; L-arginine biosynthesis; N(2)-acetyl-L-ornithine from L-glutamate: step 3/4. Catalyzes the NADPH-dependent reduction of N-acetyl-5-glutamyl phosphate to yield N-acetyl-L-glutamate 5-semialdehyde. The polypeptide is N-acetyl-gamma-glutamyl-phosphate reductase (Streptococcus mutans serotype c (strain ATCC 700610 / UA159)).